We begin with the raw amino-acid sequence, 324 residues long: tRNA-modifying protein YgfZ (324 aa).

Residue Trp-184 participates in folate binding.

Belongs to the tRNA-modifying YgfZ family.

Its subcellular location is the cytoplasm. Functionally, folate-binding protein involved in regulating the level of ATP-DnaA and in the modification of some tRNAs. It is probably a key factor in regulatory networks that act via tRNA modification, such as initiation of chromosomal replication. This is tRNA-modifying protein YgfZ from Vibrio vulnificus (strain YJ016).